A 900-amino-acid polypeptide reads, in one-letter code: Methionine--tRNA ligase, cytoplasmic (900 aa).

Residues 74 to 198 form the GST C-terminal domain; the sequence is GWEQDDLTNQ…VLKQQGVLAL (125 aa). The short motif at 273–283 is the 'HIGH' region element; it reads PYVNNVPHLGN. Positions 593-597 match the 'KMSKS' region motif; it reads KFSKS. Lys-596 contacts ATP. Ser-825 is subject to Phosphoserine. Thr-835 carries the phosphothreonine modification. In terms of domain architecture, WHEP-TRS spans 841-897; the sequence is QIQALMDEVTKQGNIVRELKAQKADKNEVAAEVAKLLDLKKQLAVAEGKPPEAPKGK.

The protein belongs to the class-I aminoacyl-tRNA synthetase family. Monomer. Part of a multisubunit complex that groups tRNA ligases for Arg (RARS1), Asp (DARS1), Gln (QARS1), Ile (IARS1), Leu (LARS1), Lys (KARS1), Met (MARS1) the bifunctional ligase for Glu and Pro (EPRS1) and the auxiliary subunits AIMP1/p43, AIMP2/p38 and EEF1E1/p18. Forms a linear complex that contains MARS1, EEF1E1, EPRS1 and AIMP2 that is at the core of the multisubunit complex.

Its subcellular location is the cytoplasm. It localises to the cytosol. The protein localises to the nucleus. It is found in the nucleolus. It catalyses the reaction tRNA(Met) + L-methionine + ATP = L-methionyl-tRNA(Met) + AMP + diphosphate. With respect to regulation, enzyme activity is increased by spermidine, EEF1A1, and when the Mg(2+) concentration is increased from 5 mM to 13 mM (in vitro), possibly by promoting the dissociation of the complex between the enzyme and its product. Catalyzes the specific attachment of an amino acid to its cognate tRNA in a 2 step reaction: the amino acid (AA) is first activated by ATP to form AA-AMP and then transferred to the acceptor end of the tRNA. Plays a role in the synthesis of ribosomal RNA in the nucleolus. The chain is Methionine--tRNA ligase, cytoplasmic from Homo sapiens (Human).